The primary structure comprises 567 residues: Geranylgeranyl transferase type-2 subunit alpha (567 aa).

6 PFTA repeats span residues 44 to 78 (LDES…QLET), 88 to 122 (LVKA…RLPE), 124 to 158 (NWTR…QAAV), 159 to 193 (PPAE…QLHP), 207 to 241 (VLLK…RADP), and 363 to 397 (VLQS…ALDP). A Phosphoserine modification is found at S98. 5 LRR repeats span residues 442–463 (EVRV…EQLL), 464–486 (LVTH…AALR), 487–508 (CLEV…TNLP), 509–530 (RLQE…QPLA), and 534–555 (RLVL…LEQL).

The protein belongs to the protein prenyltransferase subunit alpha family. In terms of assembly, heterotrimer composed of RABGGTA, RABGGTB and CHM; within this trimer, RABGGTA and RABGGTB form the catalytic component B, while CHM (component A) mediates peptide substrate binding. The Rab GGTase dimer (RGGT) interacts with CHM (component A) prior to Rab protein binding; the association is stabilized by geranylgeranyl pyrophosphate (GGpp). The CHM:RGGT:Rab complex is destabilized by GGpp. Interacts with non-phosphorylated form of RAB8A; phosphorylation of RAB8A at 'Thr-72' disrupts this interaction.

It catalyses the reaction geranylgeranyl diphosphate + L-cysteinyl-[protein] = S-geranylgeranyl-L-cysteinyl-[protein] + diphosphate. Its activity is regulated as follows. The enzymatic reaction requires the aid of a Rab escort protein (also called component A), such as CHM. In terms of biological role, catalyzes the transfer of a geranylgeranyl moiety from geranylgeranyl diphosphate to both cysteines of Rab proteins with the C-terminal sequence -XXCC, -XCXC and -CCXX, such as RAB1A, RAB3A, RAB5A and RAB7A. This is Geranylgeranyl transferase type-2 subunit alpha (RABGGTA) from Pongo abelii (Sumatran orangutan).